Reading from the N-terminus, the 940-residue chain is Isoleucine--tRNA ligase (940 aa).

Positions 58-68 (PYANGSIHIGH) match the 'HIGH' region motif. Position 564 (Glu-564) interacts with L-isoleucyl-5'-AMP. The short motif at 605–609 (KMSKS) is the 'KMSKS' region element. Residue Lys-608 coordinates ATP. Cys-903, Cys-906, Cys-923, and Cys-926 together coordinate Zn(2+).

Belongs to the class-I aminoacyl-tRNA synthetase family. IleS type 1 subfamily. As to quaternary structure, monomer. Requires Zn(2+) as cofactor.

Its subcellular location is the cytoplasm. It catalyses the reaction tRNA(Ile) + L-isoleucine + ATP = L-isoleucyl-tRNA(Ile) + AMP + diphosphate. Functionally, catalyzes the attachment of isoleucine to tRNA(Ile). As IleRS can inadvertently accommodate and process structurally similar amino acids such as valine, to avoid such errors it has two additional distinct tRNA(Ile)-dependent editing activities. One activity is designated as 'pretransfer' editing and involves the hydrolysis of activated Val-AMP. The other activity is designated 'posttransfer' editing and involves deacylation of mischarged Val-tRNA(Ile). This Shewanella woodyi (strain ATCC 51908 / MS32) protein is Isoleucine--tRNA ligase.